The following is a 122-amino-acid chain: Large ribosomal subunit protein uL14 (122 aa).

The protein belongs to the universal ribosomal protein uL14 family. In terms of assembly, part of the 50S ribosomal subunit. Forms a cluster with proteins L3 and L19. In the 70S ribosome, L14 and L19 interact and together make contacts with the 16S rRNA in bridges B5 and B8.

Its function is as follows. Binds to 23S rRNA. Forms part of two intersubunit bridges in the 70S ribosome. This Salinibacter ruber (strain DSM 13855 / M31) protein is Large ribosomal subunit protein uL14.